A 281-amino-acid polypeptide reads, in one-letter code: Pantothenate synthetase (281 aa).

Position 31–38 (31–38) interacts with ATP; that stretch reads MGNLHAGH. His38 functions as the Proton donor in the catalytic mechanism. Residue Gln62 coordinates (R)-pantoate. Gln62 is a binding site for beta-alanine. ATP is bound at residue 150–153; the sequence is GKKD. Gln156 lines the (R)-pantoate pocket. Residues Val179 and 187-190 contribute to the ATP site; that span reads MSSR.

This sequence belongs to the pantothenate synthetase family. Homodimer.

It localises to the cytoplasm. It carries out the reaction (R)-pantoate + beta-alanine + ATP = (R)-pantothenate + AMP + diphosphate + H(+). It participates in cofactor biosynthesis; (R)-pantothenate biosynthesis; (R)-pantothenate from (R)-pantoate and beta-alanine: step 1/1. Catalyzes the condensation of pantoate with beta-alanine in an ATP-dependent reaction via a pantoyl-adenylate intermediate. This is Pantothenate synthetase from Xylella fastidiosa (strain 9a5c).